The following is a 37-amino-acid chain: Large ribosomal subunit protein bL36c (37 aa).

It belongs to the bacterial ribosomal protein bL36 family.

It is found in the plastid. Its subcellular location is the chloroplast. The chain is Large ribosomal subunit protein bL36c from Cucumis sativus (Cucumber).